A 709-amino-acid chain; its full sequence is Probable serine/threonine-protein kinase zyg-1 (709 aa).

Residues 13–251 (FQNLQQIGQG…LKEIVMTDYV (239 aa)) enclose the Protein kinase domain. Residues 19–27 (IGQGGFGVV) and Lys41 each bind ATP. The active-site Proton acceptor is Asp130. Disordered stretches follow at residues 254 to 329 (KMGE…DRAR) and 591 to 633 (SSSQ…PAAT). Composition is skewed to basic and acidic residues over residues 262–291 (SREH…ERRP) and 302–313 (SRRDPDGYRAAH). Over residues 607–627 (PLSSRTTSSLNVRNGVSSDEN) the composition is skewed to polar residues.

Belongs to the protein kinase superfamily. Ser/Thr protein kinase family.

It is found in the cytoplasm. It localises to the cytoskeleton. The protein resides in the microtubule organizing center. Its subcellular location is the centrosome. The protein localises to the centriole. The enzyme catalyses L-seryl-[protein] + ATP = O-phospho-L-seryl-[protein] + ADP + H(+). It carries out the reaction L-threonyl-[protein] + ATP = O-phospho-L-threonyl-[protein] + ADP + H(+). Protein kinase that plays a central role in centrosome duplication. Paternal copy is required to regulate synthesis of daughter centrioles prior to fertilization. Maternal copy regulates centrosome duplication during later cell cycles. Functions upstream of sas-5 and sas-6, and is required for their localization to the centrosome. In Caenorhabditis briggsae, this protein is Probable serine/threonine-protein kinase zyg-1 (zyg-1).